The primary structure comprises 896 residues: Alanine--tRNA ligase (896 aa).

Zn(2+) contacts are provided by His580, His584, Cys683, and His687.

This sequence belongs to the class-II aminoacyl-tRNA synthetase family. Requires Zn(2+) as cofactor.

The protein resides in the cytoplasm. The enzyme catalyses tRNA(Ala) + L-alanine + ATP = L-alanyl-tRNA(Ala) + AMP + diphosphate. Functionally, catalyzes the attachment of alanine to tRNA(Ala) in a two-step reaction: alanine is first activated by ATP to form Ala-AMP and then transferred to the acceptor end of tRNA(Ala). Also edits incorrectly charged Ser-tRNA(Ala) and Gly-tRNA(Ala) via its editing domain. This is Alanine--tRNA ligase from Mycolicibacterium smegmatis (strain ATCC 700084 / mc(2)155) (Mycobacterium smegmatis).